The sequence spans 253 residues: Triosephosphate isomerase, cytosolic (253 aa).

Residues Asn-10 and Lys-12 each coordinate substrate. His-96 (electrophile) is an active-site residue. The active-site Proton acceptor is Glu-166.

The protein belongs to the triosephosphate isomerase family. Homodimer.

The protein localises to the cytoplasm. The catalysed reaction is D-glyceraldehyde 3-phosphate = dihydroxyacetone phosphate. It functions in the pathway carbohydrate biosynthesis; gluconeogenesis. Its pathway is carbohydrate degradation; glycolysis; D-glyceraldehyde 3-phosphate from glycerone phosphate: step 1/1. In Coptis japonica (Japanese goldthread), this protein is Triosephosphate isomerase, cytosolic.